The sequence spans 218 residues: Trichothecene biosynthesis transcription regulator TRI6 (218 aa).

Residues 154–181 (SQSTNDPGDAGKKGFATRKDRARHEAKH) form a disordered region. Residues 162–176 (DAGKKGFATRKDRAR) show a composition bias toward basic and acidic residues. The C2H2-type zinc finger occupies 185–215 (IRCQWRDNNGDQCTRTFSRMDNMRDHFRRIH).

It is found in the nucleus. In terms of biological role, transcriptional activator of part of the trichothecene biosynthesis cluster that mediates the production of the antimicrobial trichothecene harzianum A (HA) that plays a role in Botrytis cinerea antagonistic activity and plant defense priming. Regulates expression of both trichothecene and mevalonate pathway genes. The sequence is that of Trichothecene biosynthesis transcription regulator TRI6 from Trichoderma arundinaceum.